The primary structure comprises 890 residues: Nitrate reductase [NADH] 2 (890 aa).

Residue cysteine 165 coordinates Mo-molybdopterin. Positions 513–588 (SKMFSVSEVK…LEDYRIGELI (76 aa)) constitute a Cytochrome b5 heme-binding domain. Heme-binding residues include histidine 548 and histidine 571. One can recognise an FAD-binding FR-type domain in the interval 634 to 746 (RQKIPCKLVS…KGPLGHIEYT (113 aa)). FAD is bound by residues 686–689 (RAYT), 703–707 (LIKVY), phenylalanine 708, phenylalanine 715, 720–722 (LMS), and threonine 773.

It belongs to the nitrate reductase family. As to quaternary structure, homodimer. FAD serves as cofactor. Heme is required as a cofactor. It depends on Mo-molybdopterin as a cofactor.

It catalyses the reaction nitrite + NAD(+) + H2O = nitrate + NADH + H(+). In terms of biological role, nitrate reductase is a key enzyme involved in the first step of nitrate assimilation in plants, fungi and bacteria. The protein is Nitrate reductase [NADH] 2 (NIA2) of Phaseolus vulgaris (Kidney bean).